A 406-amino-acid polypeptide reads, in one-letter code: MPQGETFHRAVSNVLFISQIYGLLPVSNVRALDVADIRFRWCSPRILYSLLIGILNLSEFGAVINYVIKVTINFHTSSTLSLYIVCLLEHLFFWRLAIQWPRIMRTWHGVEQLFLRVPYRFYGEYRIKRRIYIVFTIVMSSALVEHCLLLGNSFHLSNMERTQCKINVTYFESIYKWERPHLYMILPYHFWMLPILEWVNQTIAYPRSFTDCFIMCIGIGLAARFHQLYRRIAAVHRKVMPAVFWTEVREHYLALKRLVHLLDAAIAPLVLLAFGNNMSFICFQLFNSFKNIGVDFLVMLAFWYSLGFAVVRTLLTIFVASSINDYERKIVTALRDVPSRAWSIEVQRFSEQLGNDTTALSGSGFFYLTRSLVLAMGTTIITYELMISDVINQGSIRQKTQYCREY.

The Cytoplasmic portion of the chain corresponds to 1–47; sequence MPQGETFHRAVSNVLFISQIYGLLPVSNVRALDVADIRFRWCSPRIL. Residues 48 to 68 form a helical membrane-spanning segment; it reads YSLLIGILNLSEFGAVINYVI. Residues 69-79 lie on the Extracellular side of the membrane; it reads KVTINFHTSST. Residues 80–100 traverse the membrane as a helical segment; that stretch reads LSLYIVCLLEHLFFWRLAIQW. Residues 101–130 lie on the Cytoplasmic side of the membrane; it reads PRIMRTWHGVEQLFLRVPYRFYGEYRIKRR. A helical transmembrane segment spans residues 131-151; that stretch reads IYIVFTIVMSSALVEHCLLLG. The Extracellular segment spans residues 152–183; sequence NSFHLSNMERTQCKINVTYFESIYKWERPHLY. N-linked (GlcNAc...) asparagine glycosylation occurs at N167. Residues 184–204 form a helical membrane-spanning segment; sequence MILPYHFWMLPILEWVNQTIA. The Cytoplasmic portion of the chain corresponds to 205-265; sequence YPRSFTDCFI…KRLVHLLDAA (61 aa). A helical membrane pass occupies residues 266–286; the sequence is IAPLVLLAFGNNMSFICFQLF. Residues 287–290 are Extracellular-facing; that stretch reads NSFK. A helical transmembrane segment spans residues 291–311; the sequence is NIGVDFLVMLAFWYSLGFAVV. The Cytoplasmic portion of the chain corresponds to 312 to 370; the sequence is RTLLTIFVASSINDYERKIVTALRDVPSRAWSIEVQRFSEQLGNDTTALSGSGFFYLTR. Residues 371–391 traverse the membrane as a helical segment; it reads SLVLAMGTTIITYELMISDVI. The Extracellular portion of the chain corresponds to 392–406; it reads NQGSIRQKTQYCREY.

It belongs to the insect chemoreceptor superfamily. Gustatory receptor (GR) family. Gr5a subfamily. Expressed in Gr5a-expressing sugar-sensing cells.

It is found in the cell membrane. Its function is as follows. One of the few identified sugar gustatory receptors identified so far and which promotes the starvation-induced increase of feeding motivation. The chain is Gustatory receptor for sugar taste 64b (Gr64b) from Drosophila melanogaster (Fruit fly).